The chain runs to 437 residues: GTPase Der (437 aa).

2 consecutive EngA-type G domains span residues 3–167 and 176–352; these read NLVA…NKET and PRFA…ENRT. GTP contacts are provided by residues 9-16, 56-60, 119-122, 182-189, 229-233, and 294-297; these read GRPNVGKS, DTGGW, NKTD, GRPNAGKS, DTAGI, and NKWD. The KH-like domain occupies 353 to 437; it reads TKIPTARLNE…TPINIYIRQK (85 aa).

Belongs to the TRAFAC class TrmE-Era-EngA-EngB-Septin-like GTPase superfamily. EngA (Der) GTPase family. In terms of assembly, associates with the 50S ribosomal subunit.

Functionally, GTPase that plays an essential role in the late steps of ribosome biogenesis. The protein is GTPase Der of Bacteroides thetaiotaomicron (strain ATCC 29148 / DSM 2079 / JCM 5827 / CCUG 10774 / NCTC 10582 / VPI-5482 / E50).